Reading from the N-terminus, the 1606-residue chain is Phosphatidylinositol 3,4,5-trisphosphate-dependent Rac exchanger 2 protein (1606 aa).

Residues 23–214 (LRVCVLSELQ…KAVCSNINEA (192 aa)) enclose the DH domain. One can recognise a PH domain in the interval 245 to 361 (EMLMCGVLLK…WFEAILKERE (117 aa)). 2 consecutive DEP domains span residues 390–464 (CRQG…RFRY) and 491–566 (SLFT…FFSD). 2 consecutive PDZ domains span residues 592–671 (KSLL…VLVS) and 677–754 (TVKI…QDSI). A disordered region spans residues 1581-1606 (GVRDRTPQSAPRLYKLCEPPPPAGEE).

Interacts with RAC1. As to expression, isoform 1 is highly expressed in skeletal muscle, heart and placenta, absent from peripheral blood leukocytes. Isoform 2 is expressed in skeletal muscle, kidney, small intestine, and placenta. Isoform 3 is expressed in the heart.

In terms of biological role, functions as a RAC1 guanine nucleotide exchange factor (GEF), activating Rac proteins by exchanging bound GDP for free GTP. Its activity is synergistically activated by phosphatidylinositol 3,4,5-trisphosphate and the beta gamma subunits of heterotrimeric G protein. Mediates the activation of RAC1 in a PI3K-dependent manner. May be an important mediator of Rac signaling, acting directly downstream of both G protein-coupled receptors and phosphoinositide 3-kinase. This chain is Phosphatidylinositol 3,4,5-trisphosphate-dependent Rac exchanger 2 protein, found in Homo sapiens (Human).